The following is a 390-amino-acid chain: Succinate--CoA ligase [ADP-forming] subunit beta (390 aa).

Residues K9–M245 form the ATP-grasp domain. Residues K46, G53–G55, E99, S102, and E107 contribute to the ATP site. Mg(2+)-binding residues include N200 and D214. Residues N265 and G322–V324 each bind substrate.

Belongs to the succinate/malate CoA ligase beta subunit family. As to quaternary structure, heterotetramer of two alpha and two beta subunits. Requires Mg(2+) as cofactor.

It catalyses the reaction succinate + ATP + CoA = succinyl-CoA + ADP + phosphate. It carries out the reaction GTP + succinate + CoA = succinyl-CoA + GDP + phosphate. It participates in carbohydrate metabolism; tricarboxylic acid cycle; succinate from succinyl-CoA (ligase route): step 1/1. In terms of biological role, succinyl-CoA synthetase functions in the citric acid cycle (TCA), coupling the hydrolysis of succinyl-CoA to the synthesis of either ATP or GTP and thus represents the only step of substrate-level phosphorylation in the TCA. The beta subunit provides nucleotide specificity of the enzyme and binds the substrate succinate, while the binding sites for coenzyme A and phosphate are found in the alpha subunit. The polypeptide is Succinate--CoA ligase [ADP-forming] subunit beta (Coxiella burnetii (strain RSA 493 / Nine Mile phase I)).